The primary structure comprises 185 residues: Protein TIFY 5 (185 aa).

Positions 38 to 72 (AAEARRNLTIFYNGRMCAVNVTELQARTIISMASQ) constitute a Tify domain. Residues 77–185 (KQQQQQIQGR…RAAAPLYARR (109 aa)) form a disordered region. Residues 137 to 157 (PRAGLQAAAAAAPTMNQPPAA) are compositionally biased toward low complexity. A Jas motif is present at residues 155 to 182 (PAASGLSMKRSLQRFLEKRKTRAAAPLY). The short motif at 162 to 169 (MKRSLQRF) is the Nuclear localization signal element.

This sequence belongs to the TIFY/JAZ family. Ubiquitinated. Targeted for degradation by the SCF(COI1) E3 ubiquitin ligase-proteasome pathway during jasmonate signaling.

Its subcellular location is the nucleus. Repressor of jasmonate responses. The chain is Protein TIFY 5 from Oryza sativa subsp. indica (Rice).